The sequence spans 122 residues: Acidic phospholipase A2 (122 aa).

7 cysteine pairs are disulfide-bonded: Cys-26/Cys-115, Cys-28/Cys-44, Cys-43/Cys-95, Cys-49/Cys-122, Cys-50/Cys-88, Cys-57/Cys-81, and Cys-75/Cys-86. Ca(2+) is bound by residues Tyr-27, Gly-29, and Gly-31. Residue His-47 is part of the active site. Residue Asp-48 coordinates Ca(2+). Residue Asp-89 is part of the active site.

It depends on Ca(2+) as a cofactor. In terms of tissue distribution, expressed by the venom gland.

Its subcellular location is the secreted. It catalyses the reaction a 1,2-diacyl-sn-glycero-3-phosphocholine + H2O = a 1-acyl-sn-glycero-3-phosphocholine + a fatty acid + H(+). In terms of biological role, PLA2 catalyzes the calcium-dependent hydrolysis of the 2-acyl groups in 3-sn-phosphoglycerides. This Lachesis stenophrys (Central American bushmaster) protein is Acidic phospholipase A2.